The sequence spans 106 residues: UPF0060 membrane protein Bphy_5052 (106 aa).

4 consecutive transmembrane segments (helical) span residues 4 to 24 (LLLYVVTAVAEIVGCYLPWRW), 30 to 50 (SVWLLLPGALSLALFAWLLTF), 58 to 78 (VYAAYGGVYVAVAILWLWCVD), and 82 to 102 (PSAWDLAGVALTLAGMSIIAF).

Belongs to the UPF0060 family.

The protein resides in the cell inner membrane. In Paraburkholderia phymatum (strain DSM 17167 / CIP 108236 / LMG 21445 / STM815) (Burkholderia phymatum), this protein is UPF0060 membrane protein Bphy_5052.